A 227-amino-acid polypeptide reads, in one-letter code: Probable septum site-determining protein MinC (227 aa).

The protein belongs to the MinC family. Interacts with MinD and FtsZ.

In terms of biological role, cell division inhibitor that blocks the formation of polar Z ring septums. Rapidly oscillates between the poles of the cell to destabilize FtsZ filaments that have formed before they mature into polar Z rings. Prevents FtsZ polymerization. The polypeptide is Probable septum site-determining protein MinC (Photorhabdus laumondii subsp. laumondii (strain DSM 15139 / CIP 105565 / TT01) (Photorhabdus luminescens subsp. laumondii)).